The following is a 359-amino-acid chain: E2F transcription factor-like E2FD (359 aa).

2 consecutive DNA-binding regions follow at residues 13–78 (RKDK…SWKG) and 138–217 (RKER…RWLG). Disordered regions lie at residues 255-274 (RNKSGCSKEDSKRNGNQNTS) and 288-313 (DVKNFASGSSTPAGTSESNDMGNNIR). The span at 293 to 309 (ASGSSTPAGTSESNDMG) shows a compositional bias: polar residues.

The protein belongs to the E2F/DP family. Monomer. No interactions with DPA or E2FA. As to expression, preferentially expressed in proliferating tissues. Highly expressed in young stalk and young flowers. Lower expression in young leaves and mature flowers. Detected in cotyledonary vascular tissues, the shoot apical meristem, the base of trichomes, the fully developed stomata, the central root cylinder and in the columella of lateral roots but not in the primary root tips or in the leaf epidermal cells.

Its subcellular location is the nucleus. In terms of biological role, inhibitor of E2F-dependent regulation of gene expression. Binds specifically the E2 recognition site as a monomer without interacting with DP proteins. May be up-regulating E2FA and down-regulating repressors of cell cycle progression. Promotes cell proliferation and represses cell elongation. Regulated by proteolysis via a ubiquitin-proteasome pathway. This is E2F transcription factor-like E2FD (E2FD) from Arabidopsis thaliana (Mouse-ear cress).